The sequence spans 112 residues: Outer membrane protein assembly factor BamE (112 aa).

Residues 1-19 (MRCKTLTAAAAVLLMLTAG) form the signal peptide. Cys-20 is lipidated: N-palmitoyl cysteine. Cys-20 carries S-diacylglycerol cysteine lipidation.

Belongs to the BamE family. Part of the Bam complex, which is composed of the outer membrane protein BamA, and four lipoproteins BamB, BamC, BamD and BamE.

It localises to the cell outer membrane. Part of the outer membrane protein assembly complex, which is involved in assembly and insertion of beta-barrel proteins into the outer membrane. This Salmonella typhimurium (strain LT2 / SGSC1412 / ATCC 700720) protein is Outer membrane protein assembly factor BamE.